We begin with the raw amino-acid sequence, 144 residues long: uncharacterized protein (144 aa).

In terms of domain architecture, HIT spans 4-111 (VFCAIIAGEA…LPPRNGDKLS (108 aa)). The short motif at 96 to 100 (HVHLH) is the Histidine triad motif element.

This is an uncharacterized protein from Mycobacterium tuberculosis (strain CDC 1551 / Oshkosh).